The primary structure comprises 428 residues: ETS domain-containing protein Elk-1 (428 aa).

Residues 5–86 (VTLWQFLLQL…SGQKFVYKFV (82 aa)) constitute a DNA-binding region (ETS). Disordered regions lie at residues 121-149 (AAPG…ARSS), 165-205 (QSLQ…SPLE), and 228-358 (NLKS…SLLP). Residues 177–205 (PAVVLPSAAPAGAAAPPSGSRSTSPSPLE) show a composition bias toward low complexity. Glycyl lysine isopeptide (Lys-Gly) (interchain with G-Cter in SUMO) cross-links involve residues K230, K249, and K254. Over residues 248-261 (VKVEGPKEELEVAG) the composition is skewed to basic and acidic residues. A Phosphoserine; by MAPK1 modification is found at S324. Phosphothreonine; by MAPK1 is present on residues T336, T353, T363, and T368. A sufficient for interaction with MAD2L2 region spans residues 349–399 (GPALTPSLLPTHTLTPVLLTPSSLPPSIHFWSTLSPIAPRSPAKLSFQFPS). An O-linked (GlcNAc) threonine glycan is attached at T381. The residue at position 383 (S383) is a Phosphoserine; by MAPK1 and MAPK8. S389 bears the Phosphoserine; by MAPK1 mark. T417 carries the phosphothreonine; by MAPK1 modification. S422 carries the phosphoserine; by MAPK1 modification.

The protein belongs to the ETS family. In terms of assembly, interacts in its sumoylated form with PIAS2/PIASX which enhances its transcriptional activator activity. Interacts with MAD2L2; the interaction is direct and promotes phosphorylation by the kinases MAPK8 and/or MAPK9. Interacts with POU1F1. Sumoylation represses transcriptional activator activity as it results in recruitment of HDAC2 to target gene promoters which leads to decreased histone acetylation and reduced transactivator activity. It also regulates nuclear retention. In terms of processing, on mitogenic stimulation, phosphorylated on C-terminal serine and threonine residues by MAPK1. Ser-383 and Ser-389 are the preferred sites for MAPK1. In vitro, phosphorylation by MAPK1 potentiates ternary complex formation with the serum responses factors, SRE and SRF. Also phosphorylated on Ser-383 by MAPK8 and/or MAKP9. Phosphorylation leads to loss of sumoylation and restores transcriptional activator activity. Phosphorylated and activated by CAMK4, MAPK11, MAPK12 and MAPK14. Upon bFGF stimulus, phosphorylated by PAK1. Phosphorylated by PRP4K at Thr-417; phosphorylation activation ELK1 transcriptional activity. Lung and testis.

It is found in the nucleus. In terms of biological role, transcription factor that binds to purine-rich DNA sequences. Forms a ternary complex with SRF and the ETS and SRF motifs of the serum response element (SRE) on the promoter region of immediate early genes such as FOS and IER2. Induces target gene transcription upon JNK and MAPK-signaling pathways stimulation. The chain is ETS domain-containing protein Elk-1 from Homo sapiens (Human).